A 623-amino-acid polypeptide reads, in one-letter code: DNA mismatch repair protein MutL (623 aa).

Polar residues predominate over residues 353–368 (AQQSAPRPANSYSPAS). The tract at residues 353-389 (AQQSAPRPANSYSPASWRTAPPAPRSEWSPQTAQTAH) is disordered.

The protein belongs to the DNA mismatch repair MutL/HexB family.

This protein is involved in the repair of mismatches in DNA. It is required for dam-dependent methyl-directed DNA mismatch repair. May act as a 'molecular matchmaker', a protein that promotes the formation of a stable complex between two or more DNA-binding proteins in an ATP-dependent manner without itself being part of a final effector complex. This chain is DNA mismatch repair protein MutL, found in Brucella melitensis biotype 2 (strain ATCC 23457).